The primary structure comprises 2192 residues: BEACH domain-containing protein lvsE (2192 aa).

Disordered stretches follow at residues 948-969, 996-1065, 1160-1303, and 1343-1363; these read STSL…TSTG, TTTT…DEPE, NESQ…NNLS, and DENG…SSSN. Residues 996-1049 are compositionally biased toward low complexity; it reads TTTTTTTTTTTTTTSTTSNTGNDSPLSIESPISSPVLIENTTNTTNTTTTNTTN. A compositionally biased stretch (polar residues) spans 1171-1187; it reads NIDNLNPNTGLPYNKST. The span at 1188 to 1231 shows a compositional bias: low complexity; the sequence is NNLSNVNNVNNNNNNNSNNINVSGNNTIGPSSSKSPLRNSRSMS. The segment covering 1232–1243 has biased composition (polar residues); it reads IGSSATKSPSRQ. Composition is skewed to low complexity over residues 1253 to 1303 and 1350 to 1363; these read NNNS…NNLS and SSPN…SSSN. The 126-residue stretch at 1366–1491 folds into the BEACH-type PH domain; that stretch reads IEEEKFIGSW…ESIQIFNKIV (126 aa). Residues 1504 to 1795 form the BEACH domain; sequence DHPSKIIKKS…QLFSKPHPIR (292 aa). The segment covering 1823-1849 has biased composition (low complexity); sequence GTINSSFSSTSTSTSTSSPPPSTLNSP. A disordered region spans residues 1823–1851; the sequence is GTINSSFSSTSTSTSTSSPPPSTLNSPQG. 3 WD repeats span residues 1973 to 2012, 2022 to 2061, and 2156 to 2192; these read FHHD…IKDS, SHDE…YQRS, and DSPA…VKDL.

The protein is BEACH domain-containing protein lvsE (lvsE) of Dictyostelium discoideum (Social amoeba).